The sequence spans 579 residues: Type II methyltransferase M.BseCI (579 aa).

This sequence belongs to the N(4)/N(6)-methyltransferase family.

It carries out the reaction a 2'-deoxyadenosine in DNA + S-adenosyl-L-methionine = an N(6)-methyl-2'-deoxyadenosine in DNA + S-adenosyl-L-homocysteine + H(+). Functionally, a gamma subtype methylase, recognizes the double-stranded sequence 5'-ATCGAT-3', methylation on A-5 on both strands, and protects the DNA from cleavage by the BanIII endonuclease. The chain is Type II methyltransferase M.BseCI from Geobacillus stearothermophilus (Bacillus stearothermophilus).